A 72-amino-acid chain; its full sequence is uncharacterized protein (72 aa).

Positions 1–38 are enriched in low complexity; sequence MSIFSSLSSLSTGSLKSSVSSIENGSSSGSFGSNETSG. The tract at residues 1-42 is disordered; sequence MSIFSSLSSLSTGSLKSSVSSIENGSSSGSFGSNETSGWGQH.

This is an uncharacterized protein from Dictyostelium discoideum (Social amoeba).